A 90-amino-acid chain; its full sequence is Large ribosomal subunit protein bL31B-1 (90 aa).

This sequence belongs to the bacterial ribosomal protein bL31 family. Type B subfamily. Part of the 50S ribosomal subunit.

The protein is Large ribosomal subunit protein bL31B-1 of Streptomyces coelicolor (strain ATCC BAA-471 / A3(2) / M145).